Reading from the N-terminus, the 1386-residue chain is Roundabout homolog 3 (1386 aa).

Residues 1-20 (MLRYLLKTLLQMNLFADSLA) form the signal peptide. Residues 21-891 (GDISNSSELL…VRLARVLREP (871 aa)) lie on the Extracellular side of the membrane. Asparagine 25, asparagine 34, asparagine 41, and asparagine 53 each carry an N-linked (GlcNAc...) asparagine glycan. 5 Ig-like C2-type domains span residues 64–160 (PRIV…ASLE), 166–253 (DDFR…AEVM), 258–342 (PSFL…GSLS), 347–440 (PQLV…ALLE), and 450–531 (PPVI…GEAT). Cysteine 85 and cysteine 143 form a disulfide bridge. Residue asparagine 156 is glycosylated (N-linked (GlcNAc...) asparagine). Cystine bridges form between cysteine 187–cysteine 236, cysteine 279–cysteine 326, and cysteine 368–cysteine 424. Asparagine 410, asparagine 459, and asparagine 503 each carry an N-linked (GlcNAc...) asparagine glycan. Cysteine 472 and cysteine 521 are oxidised to a cystine. 2 disordered regions span residues 541–563 (DWGV…SQPV) and 639–662 (EPSP…EDPW). Over residues 546 to 559 (PDPPTEPSSPPGAP) the composition is skewed to pro residues. Fibronectin type-III domains are found at residues 558-652 (APSQ…TQDS), 671-766 (VAVR…IPEE), and 771-869 (PPQG…SPPD). Asparagine 784, asparagine 813, and asparagine 820 each carry an N-linked (GlcNAc...) asparagine glycan. The chain crosses the membrane as a helical span at residues 892–912 (AFLAGSGAACGALLLGLCAAL). Residues 913-1386 (YWRRKQRKEL…PGQKRREEPR (474 aa)) are Cytoplasmic-facing. 3 disordered regions span residues 965–989 (SWPH…NPDP), 1028–1310 (ELQT…AVPL), and 1327–1386 (SRPS…EEPR). The segment covering 1067 to 1083 (VKLLGKPVQMPSLNWPE) has biased composition (low complexity). Residues 1099–1112 (GPEEELEGSSEPEE) are compositionally biased toward acidic residues. A compositionally biased stretch (pro residues) spans 1158 to 1169 (PSPPDPPQPPTD). Composition is skewed to low complexity over residues 1178-1191 (RRVP…LSVS) and 1202-1229 (PAGL…SAPG). A Phosphoserine modification is found at serine 1263. Basic and acidic residues predominate over residues 1294-1304 (LERERSGERKA). The segment covering 1333 to 1344 (SRGQGTSTCSTA) has biased composition (polar residues). Positions 1345-1361 (GSNSSRGSSSSRGSRGP) are enriched in low complexity.

This sequence belongs to the immunoglobulin superfamily. ROBO family. In terms of assembly, monomer. Interacts (via Fibronectin type-III 1 domain) with NELL2 (via the EGF domains) with a 3:3 stoichiometry; this interaction promotes oligomerization of ROBO3 resulting in the repulsion of commissural axons in the midline.

The protein localises to the membrane. Its function is as follows. Receptor involved in axon guidance during development. Acts as a multifunctional regulator of pathfinding that simultaneously mediates NELL2 repulsion, inhibits SLIT repulsion, and facilitates Netrin-1/NTN1 attraction. In spinal cord development plays a role in guiding commissural axons probably by preventing premature sensitivity to Slit proteins thus inhibiting Slit signaling through ROBO1/ROBO2. Binding OF NELL2 to the receptor ROBO3 promotes oligomerization of ROBO3, resulting in the repulsion of commissural axons in the midline. ROBO3 also indirectly boosts axon attraction to NTN1 without interacting with NTN1 itself. This Homo sapiens (Human) protein is Roundabout homolog 3.